Here is a 306-residue protein sequence, read N- to C-terminus: Homoserine kinase (306 aa).

91–101 (PLARGLGSSAT) serves as a coordination point for ATP.

Belongs to the GHMP kinase family. Homoserine kinase subfamily.

The protein resides in the cytoplasm. The enzyme catalyses L-homoserine + ATP = O-phospho-L-homoserine + ADP + H(+). The protein operates within amino-acid biosynthesis; L-threonine biosynthesis; L-threonine from L-aspartate: step 4/5. Its function is as follows. Catalyzes the ATP-dependent phosphorylation of L-homoserine to L-homoserine phosphate. This Synechocystis sp. (strain ATCC 27184 / PCC 6803 / Kazusa) protein is Homoserine kinase.